The sequence spans 302 residues: Sulfate adenylyltransferase subunit 2 (302 aa).

The protein belongs to the PAPS reductase family. CysD subfamily. Heterodimer composed of CysD, the smaller subunit, and CysN.

The catalysed reaction is sulfate + ATP + H(+) = adenosine 5'-phosphosulfate + diphosphate. Its pathway is sulfur metabolism; hydrogen sulfide biosynthesis; sulfite from sulfate: step 1/3. In terms of biological role, with CysN forms the ATP sulfurylase (ATPS) that catalyzes the adenylation of sulfate producing adenosine 5'-phosphosulfate (APS) and diphosphate, the first enzymatic step in sulfur assimilation pathway. APS synthesis involves the formation of a high-energy phosphoric-sulfuric acid anhydride bond driven by GTP hydrolysis by CysN coupled to ATP hydrolysis by CysD. This Proteus mirabilis (strain HI4320) protein is Sulfate adenylyltransferase subunit 2.